The chain runs to 341 residues: Phenazine O-methyltransferase PhzM (341 aa).

Residues Asp-205 and 231–233 (GDF) each bind S-adenosyl-L-methionine. Residue His-251 is the Proton acceptor of the active site.

This sequence belongs to the class I-like SAM-binding methyltransferase superfamily. Cation-independent O-methyltransferase family. As to quaternary structure, homodimer.

It carries out the reaction 1,6-dihydroxyphenazine + S-adenosyl-L-methionine = 1-hydroxy-6-methoxyphenazine + S-adenosyl-L-homocysteine + H(+). It catalyses the reaction 1-hydroxy-6-methoxyphenazine + S-adenosyl-L-methionine = 1,6-dimethoxyphenazine + S-adenosyl-L-homocysteine + H(+). The enzyme catalyses 1-hydroxy-6-methoxyphenazine N(10)-oxide + S-adenosyl-L-methionine = 1,6-dimethoxyphenazine N(5)-oxide + S-adenosyl-L-homocysteine. The catalysed reaction is 1,6-dihydroxyphenazine N(5),N(10)-dioxide + S-adenosyl-L-methionine = 1-hydroxy-6-methoxyphenazine N(5),N(10)-dioxide + S-adenosyl-L-homocysteine. It carries out the reaction 1-hydroxy-6-methoxyphenazine N(5),N(10)-dioxide + S-adenosyl-L-methionine = 1,6-dimethoxyphenazine N(5),N(10)-dioxide + S-adenosyl-L-homocysteine. Functionally, involved in the biosynthesis of phenazine natural products including myxin, an N(5),N(10)-dioxide phenazine antiobiotic, which has antimicrobial activity. O-methyltransferase, which converts iodinin (1,6-dihydroxyphenazine N(5),N(10)-dioxide) to myxin (1-hydroxy-6-methoxyphenazine N(5),N(10)-dioxide). Catalyzes both monomethoxy and dimethoxy formation of phenazine natural compounds. Acts on a wide variety of substrates, catalyzing O-methylation of phenazines with non-, mono- or di-N-oxide. Highest activity with 1,6-dihydroxyphenazine (DHP) as substrate. Less active with monohydroxy-containing and monohydroxy-monomethoxy-containing phenazines. Least active with non-phenazine substrates, such as 8-hydroxyquinoline and 6-hydroxyquinoline. Is not able to convert 1-hydroxyphenazine to 1-hydroxy-N5-methylphenazine (pyocyanine), hence does not function as an N-methyltransferase. In Lysobacter antibioticus, this protein is Phenazine O-methyltransferase PhzM.